The primary structure comprises 209 residues: Large ribosomal subunit protein uL3 (209 aa).

Positions 127 to 147 (YSRGPMGHGSKSHRVAGARSA) are disordered.

Belongs to the universal ribosomal protein uL3 family. As to quaternary structure, part of the 50S ribosomal subunit. Forms a cluster with proteins L14 and L19.

One of the primary rRNA binding proteins, it binds directly near the 3'-end of the 23S rRNA, where it nucleates assembly of the 50S subunit. The chain is Large ribosomal subunit protein uL3 from Finegoldia magna (strain ATCC 29328 / DSM 20472 / WAL 2508) (Peptostreptococcus magnus).